A 377-amino-acid chain; its full sequence is Glutamate 5-kinase (377 aa).

Position 20 (Lys-20) interacts with ATP. Ser-60, Asp-147, and Asn-159 together coordinate substrate. Ser-179 to Asp-180 lines the ATP pocket. In terms of domain architecture, PUA spans His-281–Phe-355.

This sequence belongs to the glutamate 5-kinase family.

It localises to the cytoplasm. It catalyses the reaction L-glutamate + ATP = L-glutamyl 5-phosphate + ADP. Its pathway is amino-acid biosynthesis; L-proline biosynthesis; L-glutamate 5-semialdehyde from L-glutamate: step 1/2. In terms of biological role, catalyzes the transfer of a phosphate group to glutamate to form L-glutamate 5-phosphate. The polypeptide is Glutamate 5-kinase (Corynebacterium jeikeium (strain K411)).